The primary structure comprises 214 residues: Adenylate kinase (214 aa).

10 to 15 lines the ATP pocket; sequence GAGKGT. Residues 30 to 59 form an NMP region; it reads STGDMFRAAIKAGTELGKQAKALMDEGKLV. Residues threonine 31, arginine 36, 57–59, 85–88, and glutamine 92 contribute to the AMP site; these read KLV and GFPR. Residues 122 to 159 are LID; that stretch reads GRRVHQTSGRSYHIVYNPPKVEGKDDVTGEDLIIRADD. ATP is bound by residues arginine 123 and 132 to 133; that span reads SY. AMP is bound by residues arginine 156 and arginine 167. Glutamine 200 is an ATP binding site.

It belongs to the adenylate kinase family. As to quaternary structure, monomer.

Its subcellular location is the cytoplasm. It catalyses the reaction AMP + ATP = 2 ADP. Its pathway is purine metabolism; AMP biosynthesis via salvage pathway; AMP from ADP: step 1/1. Its function is as follows. Catalyzes the reversible transfer of the terminal phosphate group between ATP and AMP. Plays an important role in cellular energy homeostasis and in adenine nucleotide metabolism. This is Adenylate kinase from Haemophilus influenzae (strain PittEE).